The chain runs to 178 residues: ATP-dependent protease subunit HslV (178 aa).

T2 is an active-site residue. Residues G157, C160, and T163 each coordinate Na(+).

The protein belongs to the peptidase T1B family. HslV subfamily. As to quaternary structure, a double ring-shaped homohexamer of HslV is capped on each side by a ring-shaped HslU homohexamer. The assembly of the HslU/HslV complex is dependent on binding of ATP.

Its subcellular location is the cytoplasm. It catalyses the reaction ATP-dependent cleavage of peptide bonds with broad specificity.. Its activity is regulated as follows. Allosterically activated by HslU binding. Protease subunit of a proteasome-like degradation complex believed to be a general protein degrading machinery. In Hamiltonella defensa subsp. Acyrthosiphon pisum (strain 5AT), this protein is ATP-dependent protease subunit HslV.